Consider the following 104-residue polypeptide: Flagellar hook-basal body complex protein FliE (104 aa).

Belongs to the FliE family.

Its subcellular location is the bacterial flagellum basal body. This chain is Flagellar hook-basal body complex protein FliE, found in Salmonella heidelberg (strain SL476).